The sequence spans 284 residues: Deoxyribonuclease-1 (284 aa).

The N-terminal stretch at methionine 1 to threonine 22 is a signal peptide. N-linked (GlcNAc...) asparagine glycosylation occurs at asparagine 40. Glutamate 100 is an active-site residue. Residues cysteine 123 and cysteine 126 are joined by a disulfide bond. N-linked (GlcNAc...) asparagine glycosylation is present at asparagine 128. Histidine 156 is an active-site residue. Cysteine 195 and cysteine 231 are oxidised to a cystine.

The protein belongs to the DNase I family. Requires Ca(2+) as cofactor. The cofactor is Mg(2+). N-glycosylated. In terms of tissue distribution, highly expressed in the parotid and submandibular gland as well as in the kidney and duodenum (at protein level). Expressed at intermediate level in the ileum, mesenterial lymph nodes, liver, ventral prostate, epididymis, ovary and stomach (at protein level). Expressed at low level in the sublingual, preputial, coagulation and pituitary gland (at protein level). Also present in the lachrymal and thyroid glands, striated muscle, intestine, the urinary bladder and the eye.

It localises to the secreted. It is found in the zymogen granule. Its subcellular location is the nucleus envelope. It carries out the reaction Endonucleolytic cleavage to 5'-phosphodinucleotide and 5'-phosphooligonucleotide end-products.. In terms of biological role, serum endocuclease secreted into body fluids by a wide variety of exocrine and endocrine organs. Expressed by non-hematopoietic tissues and preferentially cleaves protein-free DNA. Among other functions, seems to be involved in cell death by apoptosis. Binds specifically to G-actin and blocks actin polymerization. Together with DNASE1L3, plays a key role in degrading neutrophil extracellular traps (NETs). NETs are mainly composed of DNA fibers and are released by neutrophils to bind pathogens during inflammation. Degradation of intravascular NETs by DNASE1 and DNASE1L3 is required to prevent formation of clots that obstruct blood vessels and cause organ damage following inflammation. The sequence is that of Deoxyribonuclease-1 from Mus musculus (Mouse).